We begin with the raw amino-acid sequence, 485 residues long: Glutamyl-tRNA(Gln) amidotransferase subunit A (485 aa).

Residues Lys79 and Ser154 each act as charge relay system in the active site. The active-site Acyl-ester intermediate is Ser178.

It belongs to the amidase family. GatA subfamily. In terms of assembly, heterotrimer of A, B and C subunits.

The enzyme catalyses L-glutamyl-tRNA(Gln) + L-glutamine + ATP + H2O = L-glutaminyl-tRNA(Gln) + L-glutamate + ADP + phosphate + H(+). Functionally, allows the formation of correctly charged Gln-tRNA(Gln) through the transamidation of misacylated Glu-tRNA(Gln) in organisms which lack glutaminyl-tRNA synthetase. The reaction takes place in the presence of glutamine and ATP through an activated gamma-phospho-Glu-tRNA(Gln). This is Glutamyl-tRNA(Gln) amidotransferase subunit A from Persephonella marina (strain DSM 14350 / EX-H1).